The primary structure comprises 173 residues: Crossover junction endodeoxyribonuclease RuvC (173 aa).

Catalysis depends on residues D8, E67, and D139. Residues D8, E67, and D139 each contribute to the Mg(2+) site.

It belongs to the RuvC family. Homodimer which binds Holliday junction (HJ) DNA. The HJ becomes 2-fold symmetrical on binding to RuvC with unstacked arms; it has a different conformation from HJ DNA in complex with RuvA. In the full resolvosome a probable DNA-RuvA(4)-RuvB(12)-RuvC(2) complex forms which resolves the HJ. The cofactor is Mg(2+).

It is found in the cytoplasm. It catalyses the reaction Endonucleolytic cleavage at a junction such as a reciprocal single-stranded crossover between two homologous DNA duplexes (Holliday junction).. Its function is as follows. The RuvA-RuvB-RuvC complex processes Holliday junction (HJ) DNA during genetic recombination and DNA repair. Endonuclease that resolves HJ intermediates. Cleaves cruciform DNA by making single-stranded nicks across the HJ at symmetrical positions within the homologous arms, yielding a 5'-phosphate and a 3'-hydroxyl group; requires a central core of homology in the junction. The consensus cleavage sequence is 5'-(A/T)TT(C/G)-3'. Cleavage occurs on the 3'-side of the TT dinucleotide at the point of strand exchange. HJ branch migration catalyzed by RuvA-RuvB allows RuvC to scan DNA until it finds its consensus sequence, where it cleaves and resolves the cruciform DNA. Functionally, plays a role in recovery after DNA ADP-ribosylation, probably via replication fork reversal. This chain is Crossover junction endodeoxyribonuclease RuvC, found in Escherichia coli O127:H6 (strain E2348/69 / EPEC).